The chain runs to 524 residues: Cytochrome P450 monooxygenase alt1 (524 aa).

A helical transmembrane segment spans residues 24-44 (IANMLSVIAFSICISPIVYFL). Residue Cys469 participates in heme binding.

The protein belongs to the cytochrome P450 family. It depends on heme as a cofactor.

Its subcellular location is the membrane. The protein operates within secondary metabolite biosynthesis. Functionally, cytochrome P450 monooxygenase; part of the gene cluster that mediates the biosynthesis of alternapyrone derivatives. Alternapyrone is a decaketide with octa-methylation from methionine on every C2 unit except the third unit. All the domains in the polyketide synthase alt5 are apparently involved in alternapyrone synthesis, that is, the 8 CMeT, 7 KR, 7 DH, and 4 ER reactions in the 9 KS-mediated condensation steps required for alternapyrone synthesis. the alternapyrone produced by alt5 might be intensively modified by cytochrome P450 monooxygenases alt1, alt2 and alt3 and FAD-dependent oxidoreductase alt4 present in the alt gene cluster. The chain is Cytochrome P450 monooxygenase alt1 from Alternaria solani.